The following is a 38-amino-acid chain: Large ribosomal subunit protein bL36 (38 aa).

The protein belongs to the bacterial ribosomal protein bL36 family.

This is Large ribosomal subunit protein bL36 from Psychrobacter arcticus (strain DSM 17307 / VKM B-2377 / 273-4).